The sequence spans 161 residues: Phosphopantetheine adenylyltransferase (161 aa).

T10 lines the substrate pocket. ATP contacts are provided by residues 10-11 and H18; that span reads TF. Substrate is bound by residues K42, L74, and R88. ATP contacts are provided by residues 89 to 91, E99, and 124 to 130; these read GLR and NSFISST.

Belongs to the bacterial CoaD family. In terms of assembly, homohexamer. The cofactor is Mg(2+).

It is found in the cytoplasm. The enzyme catalyses (R)-4'-phosphopantetheine + ATP + H(+) = 3'-dephospho-CoA + diphosphate. It functions in the pathway cofactor biosynthesis; coenzyme A biosynthesis; CoA from (R)-pantothenate: step 4/5. Its function is as follows. Reversibly transfers an adenylyl group from ATP to 4'-phosphopantetheine, yielding dephospho-CoA (dPCoA) and pyrophosphate. This is Phosphopantetheine adenylyltransferase from Photobacterium profundum (strain SS9).